Consider the following 266-residue polypeptide: Small ribosomal subunit protein uS2 (266 aa).

This sequence belongs to the universal ribosomal protein uS2 family.

The polypeptide is Small ribosomal subunit protein uS2 (Corynebacterium diphtheriae (strain ATCC 700971 / NCTC 13129 / Biotype gravis)).